Here is a 129-residue protein sequence, read N- to C-terminus: Large ribosomal subunit protein bL17 (129 aa).

Belongs to the bacterial ribosomal protein bL17 family. Part of the 50S ribosomal subunit. Contacts protein L32.

The sequence is that of Large ribosomal subunit protein bL17 from Acidovorax ebreus (strain TPSY) (Diaphorobacter sp. (strain TPSY)).